We begin with the raw amino-acid sequence, 85 residues long: Large ribosomal subunit protein bL27 (85 aa).

The tract at residues 1–22 (MAHKKAGGSTNNGRDSESKRLG) is disordered.

The protein belongs to the bacterial ribosomal protein bL27 family.

The chain is Large ribosomal subunit protein bL27 from Psychromonas ingrahamii (strain DSM 17664 / CCUG 51855 / 37).